The sequence spans 864 residues: Leukocyte tyrosine kinase receptor (864 aa).

The first 16 residues, methionine 1–alanine 16, serve as a signal peptide directing secretion. Topologically, residues isoleucine 17–proline 424 are extracellular. The segment covering arginine 30 to serine 40 has biased composition (low complexity). A disordered region spans residues arginine 30–threonine 64. Disulfide bonds link cysteine 73–cysteine 86 and cysteine 168–cysteine 179. The segment at tyrosine 239–glycine 297 is disordered. A compositionally biased stretch (basic and acidic residues) spans arginine 241–serine 259. N-linked (GlcNAc...) asparagine glycosylation is present at asparagine 257. Over residues glycine 263 to tryptophan 277 the composition is skewed to gly residues. Cysteine 300 and cysteine 322 form a disulfide bridge. 2 N-linked (GlcNAc...) asparagine glycosylation sites follow: asparagine 380 and asparagine 412. A helical membrane pass occupies residues leucine 425–valine 449. The Cytoplasmic portion of the chain corresponds to lysine 450 to serine 864. The 277-residue stretch at valine 510 to valine 786 folds into the Protein kinase domain. ATP is bound by residues leucine 516–valine 524 and lysine 544. The active-site Proton acceptor is the aspartate 643. Tyrosine 676 is modified (phosphotyrosine; by autocatalysis). 2 disordered regions span residues leucine 790–serine 830 and serine 842–serine 864. Residues leucine 852–serine 864 show a composition bias toward polar residues.

Belongs to the protein kinase superfamily. Tyr protein kinase family. Insulin receptor subfamily. In terms of assembly, homodimer; homodimerizes following ligand-binding. Part of a complex including LTK, TNK2 and GRB2, in which GRB2 promotes LTK recruitment by TNK2. In terms of processing, phosphorylated at tyrosine residues by autocatalysis, which activates kinase activity. As to expression, expressed in non-hematopoietic cell lines and T- and B-cell lines.

The protein resides in the cell membrane. The enzyme catalyses L-tyrosyl-[protein] + ATP = O-phospho-L-tyrosyl-[protein] + ADP + H(+). Activated by ligand-binding, leading to homodimerization and autophosphorylation. In terms of biological role, receptor with a tyrosine-protein kinase activity. Following activation by ALKAL1 or ALKAL2 ligands at the cell surface, transduces an extracellular signal into an intracellular response. Ligand-binding to the extracellular domain induces tyrosine kinase activation, leading to activation of the mitogen-activated protein kinase (MAPK) pathway. Phosphorylates almost exclusively at the first tyrosine of the Y-x-x-x-Y-Y motif. The exact function of this protein is not known; studies with chimeric proteins demonstrate its ability to promote growth and specifically neurite outgrowth, and cell survival. Involved in regulation of the secretory pathway involving endoplasmic reticulum (ER) export sites (ERESs) and ER to Golgi transport. In Homo sapiens (Human), this protein is Leukocyte tyrosine kinase receptor.